Consider the following 475-residue polypeptide: Aspartyl/glutamyl-tRNA(Asn/Gln) amidotransferase subunit B (475 aa).

The protein belongs to the GatB/GatE family. GatB subfamily. As to quaternary structure, heterotrimer of A, B and C subunits.

The catalysed reaction is L-glutamyl-tRNA(Gln) + L-glutamine + ATP + H2O = L-glutaminyl-tRNA(Gln) + L-glutamate + ADP + phosphate + H(+). It carries out the reaction L-aspartyl-tRNA(Asn) + L-glutamine + ATP + H2O = L-asparaginyl-tRNA(Asn) + L-glutamate + ADP + phosphate + 2 H(+). Its function is as follows. Allows the formation of correctly charged Asn-tRNA(Asn) or Gln-tRNA(Gln) through the transamidation of misacylated Asp-tRNA(Asn) or Glu-tRNA(Gln) in organisms which lack either or both of asparaginyl-tRNA or glutaminyl-tRNA synthetases. The reaction takes place in the presence of glutamine and ATP through an activated phospho-Asp-tRNA(Asn) or phospho-Glu-tRNA(Gln). The sequence is that of Aspartyl/glutamyl-tRNA(Asn/Gln) amidotransferase subunit B from Mycoplasma mobile (strain ATCC 43663 / 163K / NCTC 11711) (Mesomycoplasma mobile).